The sequence spans 420 residues: Histidine--tRNA ligase (420 aa).

It belongs to the class-II aminoacyl-tRNA synthetase family. As to quaternary structure, homodimer.

The protein resides in the cytoplasm. The enzyme catalyses tRNA(His) + L-histidine + ATP = L-histidyl-tRNA(His) + AMP + diphosphate + H(+). The sequence is that of Histidine--tRNA ligase from Desulforudis audaxviator (strain MP104C).